Reading from the N-terminus, the 81-residue chain is MSHKVKIYDTCIGCTQCVRACPLDVLEMVPWDGCKASQIASSPRTEDCVGCKRCETACPTDFLSIRVYLGAETTRSMGLAY.

4Fe-4S ferredoxin-type domains follow at residues methionine 1–tryptophan 31 and isoleucine 39–tyrosine 68. [4Fe-4S] cluster-binding residues include cysteine 11, cysteine 14, cysteine 17, cysteine 21, cysteine 48, cysteine 51, cysteine 54, and cysteine 58.

The cyanobacterial PSI reaction center is composed of one copy each of PsaA,B,C,D,E,F,I,J,K,L,M and X, and forms trimeric complexes. [4Fe-4S] cluster serves as cofactor.

Its subcellular location is the cellular thylakoid membrane. The enzyme catalyses reduced [plastocyanin] + hnu + oxidized [2Fe-2S]-[ferredoxin] = oxidized [plastocyanin] + reduced [2Fe-2S]-[ferredoxin]. Functionally, apoprotein for the two 4Fe-4S centers FA and FB of photosystem I (PSI); essential for photochemical activity. FB is the terminal electron acceptor of PSI, donating electrons to ferredoxin. The C-terminus interacts with PsaA/B/D and helps assemble the protein into the PSI complex. Required for binding of PsaD and PsaE to PSI. PSI is a plastocyanin/cytochrome c6-ferredoxin oxidoreductase, converting photonic excitation into a charge separation, which transfers an electron from the donor P700 chlorophyll pair to the spectroscopically characterized acceptors A0, A1, FX, FA and FB in turn. This chain is Photosystem I iron-sulfur center, found in Crocosphaera subtropica (strain ATCC 51142 / BH68) (Cyanothece sp. (strain ATCC 51142)).